A 457-amino-acid polypeptide reads, in one-letter code: Vasoactive intestinal polypeptide receptor 1 (457 aa).

Positions 1–30 (MRPPSPLPARWLCVLAGALAWALGPAGGQA) are cleaved as a signal peptide. Residues 31–141 (ARLQEECDYV…DEQQTMFYGS (111 aa)) are Extracellular-facing. 5 cysteine pairs are disulfide-bonded: Cys-37–Cys-208, Cys-50–Cys-72, Cys-63–Cys-105, Cys-86–Cys-122, and Cys-215–Cys-285. 3 N-linked (GlcNAc...) asparagine glycosylation sites follow: Asn-58, Asn-69, and Asn-100. A helical transmembrane segment spans residues 142–166 (VKTGYTIGYGLSLATLLVATAILSL). At 167–174 (FRKLHCTR) the chain is on the cytoplasmic side. Residues 175 to 196 (NYIHMHLFISFILRAAAVFIKD) form a helical membrane-spanning segment. Residues 197–216 (LALFDSGESDQCSEGSVGCK) are Extracellular-facing. A helical transmembrane segment spans residues 217–241 (AAMVFFQYCVMANFFWLLVEGLYLY). Over 242-254 (TLLAVSFFSERKY) the chain is Cytoplasmic. Residues 255-276 (FWGYILIGWGVPSTFTMVWTIA) form a helical membrane-spanning segment. Residues 277 to 291 (RIHFEDYGCWDTINS) are Extracellular-facing. An N-linked (GlcNAc...) asparagine glycan is attached at Asn-290. A helical membrane pass occupies residues 292–316 (SLWWIIKGPILTSILVNFILFICII). Over 317 to 338 (RILLQKLRPPDIRKSDSSPYSR) the chain is Cytoplasmic. Residues 339–359 (LARSTLLLIPLFGVHYIMFAF) traverse the membrane as a helical segment. The Extracellular portion of the chain corresponds to 360 to 367 (FPDNFKPE). The helical transmembrane segment at 368 to 391 (VKMVFELVVGSFQGFVVAILYCFL) threads the bilayer. Topologically, residues 392–457 (NGEVQAELRR…SSFQAEVSLV (66 aa)) are cytoplasmic.

Belongs to the G-protein coupled receptor 2 family. As to quaternary structure, interacts with ADCYAP1/PACAP; activated by both PACAP27 and PACAP38 neuropeptides. Interacts with VIP; the interaction results in VIPR1 activation. As to expression, in lung, HT-29 colonic epithelial cells, Raji B-lymphoblasts. Lesser extent in brain, heart, kidney, liver and placenta. Not expressed in CD4+ or CD8+ T-cells. Expressed in the T-cell lines HARRIS, HuT 78, Jurkat and SUP-T1, but not in the T-cell lines Peer, MOLT-4, HSB and YT.

Its subcellular location is the cell membrane. Functionally, g protein-coupled receptor activated by the neuropeptides vasoactive intestinal peptide (VIP) and pituitary adenylate cyclase-activating polypeptide (ADCYAP1/PACAP). Binds VIP and both PACAP27 and PACAP38 bioactive peptides with the following order of ligand affinity VIP = PACAP27 &gt; PACAP38. Ligand binding causes a conformation change that triggers signaling via guanine nucleotide-binding proteins (G proteins) and modulates the activity of downstream effectors. Activates cAMP-dependent pathway. The protein is Vasoactive intestinal polypeptide receptor 1 of Homo sapiens (Human).